The chain runs to 94 residues: Cell division protein FtsB (94 aa).

Residues 1–8 (MRLRSPYW) lie on the Cytoplasmic side of the membrane. The chain crosses the membrane as a helical span at residues 9 to 26 (LFVVLILALAGLQYRLWV). At 27–94 (GDGSLAQVRD…DGETLYQLAK (68 aa)) the chain is on the periplasmic side. Residues 31–78 (LAQVRDLQKQIADQHGENERLLERNRILEAEVAELKKGTETVEERARH) adopt a coiled-coil conformation.

Belongs to the FtsB family. In terms of assembly, part of a complex composed of FtsB, FtsL and FtsQ.

It localises to the cell inner membrane. Functionally, essential cell division protein. May link together the upstream cell division proteins, which are predominantly cytoplasmic, with the downstream cell division proteins, which are predominantly periplasmic. The sequence is that of Cell division protein FtsB from Pseudomonas aeruginosa (strain ATCC 15692 / DSM 22644 / CIP 104116 / JCM 14847 / LMG 12228 / 1C / PRS 101 / PAO1).